A 506-amino-acid chain; its full sequence is Cytochrome P450 52B1 (506 aa).

Residue Cys451 participates in heme binding.

Belongs to the cytochrome P450 family. Heme serves as cofactor.

In terms of biological role, together with an NADPH cytochrome P450 the enzyme system catalyzes the terminal hydroxylation as the first step in the assimilation of alkanes and fatty acids. This is Cytochrome P450 52B1 (CYP52B1) from Candida tropicalis (Yeast).